The primary structure comprises 353 residues: uncharacterized protein (353 aa).

The signal sequence occupies residues 1 to 28; it reads MHLTIMRRFAVLLLLAIFLGGCSGSNGA.

This is an uncharacterized protein from Archaeoglobus fulgidus (strain ATCC 49558 / DSM 4304 / JCM 9628 / NBRC 100126 / VC-16).